The chain runs to 353 residues: Photosystem II protein D1 (353 aa).

N-acetylthreonine is present on Thr2. Phosphothreonine is present on Thr2. 3 consecutive transmembrane segments (helical) span residues Tyr29–Ser46, His118–Leu133, and Trp142–Ala156. Residue His118 coordinates chlorophyll a. Residue Tyr126 participates in pheophytin a binding. Positions 170 and 189 each coordinate [CaMn4O5] cluster. Residues Phe197 to Leu218 traverse the membrane as a helical segment. Position 198 (His198) interacts with chlorophyll a. Residues His215 and Ser264–Phe265 contribute to the a quinone site. His215 is a Fe cation binding site. A Fe cation-binding site is contributed by His272. A helical transmembrane segment spans residues Phe274–Leu288. The [CaMn4O5] cluster site is built by His332, Glu333, Asp342, and Ala344. Residues Ala345–Gly353 constitute a propeptide that is removed on maturation.

The protein belongs to the reaction center PufL/M/PsbA/D family. In terms of assembly, PSII is composed of 1 copy each of membrane proteins PsbA, PsbB, PsbC, PsbD, PsbE, PsbF, PsbH, PsbI, PsbJ, PsbK, PsbL, PsbM, PsbT, PsbX, PsbY, PsbZ, Psb30/Ycf12, at least 3 peripheral proteins of the oxygen-evolving complex and a large number of cofactors. It forms dimeric complexes. It depends on The D1/D2 heterodimer binds P680, chlorophylls that are the primary electron donor of PSII, and subsequent electron acceptors. It shares a non-heme iron and each subunit binds pheophytin, quinone, additional chlorophylls, carotenoids and lipids. D1 provides most of the ligands for the Mn4-Ca-O5 cluster of the oxygen-evolving complex (OEC). There is also a Cl(-1) ion associated with D1 and D2, which is required for oxygen evolution. The PSII complex binds additional chlorophylls, carotenoids and specific lipids. as a cofactor. Tyr-161 forms a radical intermediate that is referred to as redox-active TyrZ, YZ or Y-Z. Post-translationally, C-terminally processed by CTPA; processing is essential to allow assembly of the oxygen-evolving complex and thus photosynthetic growth.

It is found in the plastid. The protein resides in the chloroplast thylakoid membrane. The catalysed reaction is 2 a plastoquinone + 4 hnu + 2 H2O = 2 a plastoquinol + O2. Functionally, photosystem II (PSII) is a light-driven water:plastoquinone oxidoreductase that uses light energy to abstract electrons from H(2)O, generating O(2) and a proton gradient subsequently used for ATP formation. It consists of a core antenna complex that captures photons, and an electron transfer chain that converts photonic excitation into a charge separation. The D1/D2 (PsbA/PsbD) reaction center heterodimer binds P680, the primary electron donor of PSII as well as several subsequent electron acceptors. The protein is Photosystem II protein D1 of Cucumis sativus (Cucumber).